We begin with the raw amino-acid sequence, 241 residues long: NAD(P)H-quinone oxidoreductase subunit K (241 aa).

[4Fe-4S] cluster is bound by residues C60, C61, C125, and C156. Positions 220-241 (SSQKEKITELPEKTEITNTEKD) are disordered. The segment covering 222–241 (QKEKITELPEKTEITNTEKD) has biased composition (basic and acidic residues).

Belongs to the complex I 20 kDa subunit family. NDH-1 can be composed of about 15 different subunits; different subcomplexes with different compositions have been identified which probably have different functions. [4Fe-4S] cluster is required as a cofactor.

The protein resides in the cellular thylakoid membrane. The enzyme catalyses a plastoquinone + NADH + (n+1) H(+)(in) = a plastoquinol + NAD(+) + n H(+)(out). It carries out the reaction a plastoquinone + NADPH + (n+1) H(+)(in) = a plastoquinol + NADP(+) + n H(+)(out). Functionally, NDH-1 shuttles electrons from an unknown electron donor, via FMN and iron-sulfur (Fe-S) centers, to quinones in the respiratory and/or the photosynthetic chain. The immediate electron acceptor for the enzyme in this species is believed to be plastoquinone. Couples the redox reaction to proton translocation, and thus conserves the redox energy in a proton gradient. Cyanobacterial NDH-1 also plays a role in inorganic carbon-concentration. This chain is NAD(P)H-quinone oxidoreductase subunit K, found in Prochlorococcus marinus (strain MIT 9215).